Consider the following 473-residue polypeptide: Photosystem II CP43 reaction center protein (473 aa).

A propeptide spanning residues M1–E14 is cleaved from the precursor. Position 15 is an N-acetylthreonine (T15). At T15 the chain carries Phosphothreonine. Transmembrane regions (helical) follow at residues L69 to A93, L134 to N155, K178 to T200, K255 to S275, and W291 to A312. E367 contacts [CaMn4O5] cluster. A helical membrane pass occupies residues R447–P471.

This sequence belongs to the PsbB/PsbC family. PsbC subfamily. PSII is composed of 1 copy each of membrane proteins PsbA, PsbB, PsbC, PsbD, PsbE, PsbF, PsbH, PsbI, PsbJ, PsbK, PsbL, PsbM, PsbT, PsbX, PsbY, PsbZ, Psb30/Ycf12, at least 3 peripheral proteins of the oxygen-evolving complex and a large number of cofactors. It forms dimeric complexes. Binds multiple chlorophylls and provides some of the ligands for the Ca-4Mn-5O cluster of the oxygen-evolving complex. It may also provide a ligand for a Cl- that is required for oxygen evolution. PSII binds additional chlorophylls, carotenoids and specific lipids. is required as a cofactor. In terms of processing, phosphorylated on threonine residue(s).

The protein resides in the plastid. The protein localises to the chloroplast thylakoid membrane. Its function is as follows. One of the components of the core complex of photosystem II (PSII). It binds chlorophyll and helps catalyze the primary light-induced photochemical processes of PSII. PSII is a light-driven water:plastoquinone oxidoreductase, using light energy to abstract electrons from H(2)O, generating O(2) and a proton gradient subsequently used for ATP formation. The polypeptide is Photosystem II CP43 reaction center protein (Marchantia polymorpha (Common liverwort)).